Reading from the N-terminus, the 288-residue chain is Bifunctional protein FolD (288 aa).

Residues 165–167, serine 190, and isoleucine 231 contribute to the NADP(+) site; that span reads GRS.

This sequence belongs to the tetrahydrofolate dehydrogenase/cyclohydrolase family. In terms of assembly, homodimer.

It catalyses the reaction (6R)-5,10-methylene-5,6,7,8-tetrahydrofolate + NADP(+) = (6R)-5,10-methenyltetrahydrofolate + NADPH. The enzyme catalyses (6R)-5,10-methenyltetrahydrofolate + H2O = (6R)-10-formyltetrahydrofolate + H(+). Its pathway is one-carbon metabolism; tetrahydrofolate interconversion. In terms of biological role, catalyzes the oxidation of 5,10-methylenetetrahydrofolate to 5,10-methenyltetrahydrofolate and then the hydrolysis of 5,10-methenyltetrahydrofolate to 10-formyltetrahydrofolate. In Nitrosospira multiformis (strain ATCC 25196 / NCIMB 11849 / C 71), this protein is Bifunctional protein FolD.